The chain runs to 282 residues: Phosphatidylserine decarboxylase proenzyme (282 aa).

Residues aspartate 89, histidine 145, and serine 249 each act as charge relay system; for autoendoproteolytic cleavage activity in the active site. The active-site Schiff-base intermediate with substrate; via pyruvic acid; for decarboxylase activity is serine 249. Position 249 is a pyruvic acid (Ser); by autocatalysis (serine 249).

This sequence belongs to the phosphatidylserine decarboxylase family. PSD-B subfamily. Prokaryotic type I sub-subfamily. As to quaternary structure, heterodimer of a large membrane-associated beta subunit and a small pyruvoyl-containing alpha subunit. The cofactor is pyruvate. In terms of processing, is synthesized initially as an inactive proenzyme. Formation of the active enzyme involves a self-maturation process in which the active site pyruvoyl group is generated from an internal serine residue via an autocatalytic post-translational modification. Two non-identical subunits are generated from the proenzyme in this reaction, and the pyruvate is formed at the N-terminus of the alpha chain, which is derived from the carboxyl end of the proenzyme. The autoendoproteolytic cleavage occurs by a canonical serine protease mechanism, in which the side chain hydroxyl group of the serine supplies its oxygen atom to form the C-terminus of the beta chain, while the remainder of the serine residue undergoes an oxidative deamination to produce ammonia and the pyruvoyl prosthetic group on the alpha chain. During this reaction, the Ser that is part of the protease active site of the proenzyme becomes the pyruvoyl prosthetic group, which constitutes an essential element of the active site of the mature decarboxylase.

It localises to the cell membrane. The catalysed reaction is a 1,2-diacyl-sn-glycero-3-phospho-L-serine + H(+) = a 1,2-diacyl-sn-glycero-3-phosphoethanolamine + CO2. Its pathway is phospholipid metabolism; phosphatidylethanolamine biosynthesis; phosphatidylethanolamine from CDP-diacylglycerol: step 2/2. Functionally, catalyzes the formation of phosphatidylethanolamine (PtdEtn) from phosphatidylserine (PtdSer). The sequence is that of Phosphatidylserine decarboxylase proenzyme from Anaeromyxobacter sp. (strain K).